The following is a 229-amino-acid chain: Probable GTP-binding protein EngB (229 aa).

An EngB-type G domain is found at 53–228 (DLPEVAFAGR…RAEIVRLCID (176 aa)). Residues 61 to 68 (GRSNVGKS), 88 to 92 (GRTRE), 106 to 109 (DLPG), 173 to 176 (TKAD), and 207 to 209 (TSS) each bind GTP. Positions 68 and 90 each coordinate Mg(2+).

It belongs to the TRAFAC class TrmE-Era-EngA-EngB-Septin-like GTPase superfamily. EngB GTPase family. Requires Mg(2+) as cofactor.

Functionally, necessary for normal cell division and for the maintenance of normal septation. In Caulobacter vibrioides (strain NA1000 / CB15N) (Caulobacter crescentus), this protein is Probable GTP-binding protein EngB.